The following is a 709-amino-acid chain: DNA topoisomerase 1 (709 aa).

The 125-residue stretch at lysine 3–isoleucine 127 folds into the Toprim domain. Glutamate 9 and aspartate 95 together coordinate Mg(2+). In terms of domain architecture, Topo IA-type catalytic spans aspartate 143–lysine 598. An interaction with DNA region spans residues serine 176–glutamine 181. The O-(5'-phospho-DNA)-tyrosine intermediate role is filled by tyrosine 334. 2 consecutive C4-type zinc fingers follow at residues cysteine 618–cysteine 646 and cysteine 667–cysteine 696.

It belongs to the type IA topoisomerase family. As to quaternary structure, monomer. Mg(2+) is required as a cofactor.

It carries out the reaction ATP-independent breakage of single-stranded DNA, followed by passage and rejoining.. Its function is as follows. Releases the supercoiling and torsional tension of DNA, which is introduced during the DNA replication and transcription, by transiently cleaving and rejoining one strand of the DNA duplex. Introduces a single-strand break via transesterification at a target site in duplex DNA. The scissile phosphodiester is attacked by the catalytic tyrosine of the enzyme, resulting in the formation of a DNA-(5'-phosphotyrosyl)-enzyme intermediate and the expulsion of a 3'-OH DNA strand. The free DNA strand then undergoes passage around the unbroken strand, thus removing DNA supercoils. Finally, in the religation step, the DNA 3'-OH attacks the covalent intermediate to expel the active-site tyrosine and restore the DNA phosphodiester backbone. This is DNA topoisomerase 1 from Mycoplasma genitalium (strain ATCC 33530 / DSM 19775 / NCTC 10195 / G37) (Mycoplasmoides genitalium).